The chain runs to 503 residues: Hemogen (503 aa).

Basic residues-rich tracts occupy residues 1-10 (MDMGKGRPRL) and 61-79 (KKRK…RKRQ). Positions 1-129 (MDMGKGRPRL…PLVPSPTKAV (129 aa)) are disordered. Positions 7–87 (RPRLKLPQMP…RQGNVEQKAE (81 aa)) are necessary for nuclear localization. Phosphoserine is present on residues Ser-90, Ser-103, Ser-124, Ser-153, Ser-158, Ser-171, Ser-213, Ser-223, Ser-228, Ser-241, and Ser-269. Thr-286 is modified (phosphothreonine). The interval 381–503 (QKTIQESPEP…ENGIYSSALF (123 aa)) is disordered. Positions 385–396 (QESPEPEQYSPE) are enriched in low complexity. Ser-387 and Ser-394 each carry phosphoserine. Residues 426 to 436 (CQDREEPKHSL) are compositionally biased toward basic and acidic residues.

As to expression, expressed in hematopoietic precursor cells. Highly expressed in bone marrow, the red pulp of the spleen and round spermatids. Weakly expressed in peripheral blood cells.

The protein resides in the nucleus. In terms of biological role, regulates the proliferation and differentiation of hematopoietic cells. Overexpression block the TPA-induced megakaryocytic differentiation in the K562 cell model. May also prevent cell apoptosis through the activation of the nuclear factor-kappa B (NF-kB). The protein is Hemogen (Hemgn) of Mus musculus (Mouse).